The following is a 265-amino-acid chain: 3-methyl-2-oxobutanoate hydroxymethyltransferase (265 aa).

Mg(2+)-binding residues include Asp45 and Asp84. 3-methyl-2-oxobutanoate-binding positions include 45-46 (DS), Asp84, and Lys112. Glu114 lines the Mg(2+) pocket. Glu181 functions as the Proton acceptor in the catalytic mechanism.

Belongs to the PanB family. As to quaternary structure, homodecamer; pentamer of dimers. Requires Mg(2+) as cofactor.

It is found in the cytoplasm. It carries out the reaction 3-methyl-2-oxobutanoate + (6R)-5,10-methylene-5,6,7,8-tetrahydrofolate + H2O = 2-dehydropantoate + (6S)-5,6,7,8-tetrahydrofolate. The protein operates within cofactor biosynthesis; (R)-pantothenate biosynthesis; (R)-pantoate from 3-methyl-2-oxobutanoate: step 1/2. Catalyzes the reversible reaction in which hydroxymethyl group from 5,10-methylenetetrahydrofolate is transferred onto alpha-ketoisovalerate to form ketopantoate. In Pseudoalteromonas atlantica (strain T6c / ATCC BAA-1087), this protein is 3-methyl-2-oxobutanoate hydroxymethyltransferase.